Consider the following 113-residue polypeptide: Endoribonuclease SymE (113 aa).

One can recognise a SpoVT-AbrB domain in the interval 29 to 74 (SRYPDYSRIPAITLKGQWLEAAGFATGTVVDVKVMEGCIVLTAQPP).

This sequence belongs to the SymE family.

Its subcellular location is the cytoplasm. In terms of biological role, involved in the degradation and recycling of damaged RNA. It is itself a target for degradation by the ATP-dependent protease Lon. The chain is Endoribonuclease SymE from Escherichia coli (strain 55989 / EAEC).